Reading from the N-terminus, the 417-residue chain is Neuropeptide FF receptor 2 (417 aa).

Residues 1–45 (MSEKWDSNSSESWNHIWSGNDTQHHWYSDINITYVNYYLHQPQVA) are Extracellular-facing. Residues Asn-8, Asn-20, and Asn-31 are each glycosylated (N-linked (GlcNAc...) asparagine). Residues 46 to 66 (AVFISSYLLIFVLCMVGNTVV) form a helical membrane-spanning segment. The Cytoplasmic segment spans residues 67–82 (CFIVIRNRHMHTVTNF). A helical transmembrane segment spans residues 83-103 (FILNLAISDLLVGIFCMPITL). Residues 104–119 (LDNIIAGWPFGSSMCK) lie on the Extracellular side of the membrane. Cys-118 and Cys-206 form a disulfide bridge. A helical membrane pass occupies residues 120–140 (ISGLVQGISVAASVFTLVAIA). Over 141–160 (VDRFRCVVYPFKPKLTVKTA) the chain is Cytoplasmic. The helical transmembrane segment at 161-181 (FVTIVIIWGLAIAIMTPSAIM) threads the bilayer. The Extracellular segment spans residues 182-217 (LHVQEEKYYRVRLSSHNKTSTVYWCREDWPRHEMRR). A glycan (N-linked (GlcNAc...) asparagine) is linked at Asn-198. Residues 218-238 (IYTTVLFATIYLAPLSLIVIM) form a helical membrane-spanning segment. At 239–274 (YARIGASLFKTAAHCTGKQRPVQWHVSKKKQKVIKM) the chain is on the cytoplasmic side. Residues 275–295 (LLTVALLFILSWLPLWTLMML) traverse the membrane as a helical segment. The Extracellular portion of the chain corresponds to 296–310 (SDYTDLSPNKLRIIN). A helical transmembrane segment spans residues 311–331 (IYIYPFAHWLAFCNSSVNPII). At 332–417 (YGFFNENFRN…MGEATNSTVA (86 aa)) the chain is on the cytoplasmic side. The disordered stretch occupies residues 382 to 401 (SQNPGGENLGCGKSADNPTQ).

Belongs to the G-protein coupled receptor 1 family.

The protein localises to the cell membrane. Receptor for NPAF (A-18-F-amide) and NPFF (F-8-F-amide) neuropeptides, also known as morphine-modulating peptides. Can also be activated by a variety of naturally occurring or synthetic FMRF-amide like ligands. This receptor mediates its action by association with G proteins that activate a phosphatidylinositol-calcium second messenger system. The protein is Neuropeptide FF receptor 2 (Npffr2) of Mus musculus (Mouse).